Here is a 643-residue protein sequence, read N- to C-terminus: 1-deoxy-D-xylulose-5-phosphate synthase (643 aa).

Thiamine diphosphate-binding positions include His-78 and 119–121 (AHS). Asp-150 is a binding site for Mg(2+). Thiamine diphosphate is bound by residues 151–152 (GS), Asn-179, Tyr-288, and Glu-370. Mg(2+) is bound at residue Asn-179.

This sequence belongs to the transketolase family. DXPS subfamily. As to quaternary structure, homodimer. Mg(2+) is required as a cofactor. It depends on thiamine diphosphate as a cofactor.

It carries out the reaction D-glyceraldehyde 3-phosphate + pyruvate + H(+) = 1-deoxy-D-xylulose 5-phosphate + CO2. It functions in the pathway metabolic intermediate biosynthesis; 1-deoxy-D-xylulose 5-phosphate biosynthesis; 1-deoxy-D-xylulose 5-phosphate from D-glyceraldehyde 3-phosphate and pyruvate: step 1/1. Functionally, catalyzes the acyloin condensation reaction between C atoms 2 and 3 of pyruvate and glyceraldehyde 3-phosphate to yield 1-deoxy-D-xylulose-5-phosphate (DXP). In Brucella abortus (strain 2308), this protein is 1-deoxy-D-xylulose-5-phosphate synthase.